The following is a 352-amino-acid chain: MLELNFSQTLGNHCLTINETLPANGITAIFGVSGAGKTSLINAISGLTRPQKGRIVLNGRVLNDADKGICLTPEKRRVGYVFQDARLFPHYKVRGNLRYGMAKSMVNQFDKLVALLGIEPLLDRLPGSLSGGEKQRVAIGRALLTAPELLLLDEPLASLDIPRKRELLPYLQRLTREINIPMLYVSHSLDEILHLADRVMVLENGQVKAFGALEEVWGSSVMNPWLPKEQQSSILKVTVLEHHPHYAMTALALGDQHLWVNKLEEPLQAALRIRIQASDVSLVLQPPQQTSIRNVLRAKVVNSYDDNGQVEVELEVGGKTLWARISPWARDELAIKPGLWLYAQIKSVSITA.

Residues methionine 1–glutamate 229 enclose the ABC transporter domain. Glycine 31–threonine 38 provides a ligand contact to ATP. Positions glutamine 289 to alanine 352 constitute a Mop domain.

The protein belongs to the ABC transporter superfamily. Molybdate importer (TC 3.A.1.8) family. As to quaternary structure, the complex is composed of two ATP-binding proteins (ModC), two transmembrane proteins (ModB) and a solute-binding protein (ModA).

It localises to the cell inner membrane. It carries out the reaction molybdate(out) + ATP + H2O = molybdate(in) + ADP + phosphate + H(+). Part of the ABC transporter complex ModABC involved in molybdenum import. Responsible for energy coupling to the transport system. This chain is Molybdenum import ATP-binding protein ModC, found in Escherichia coli O6:H1 (strain CFT073 / ATCC 700928 / UPEC).